The chain runs to 549 residues: Glucose-6-phosphate isomerase (549 aa).

Glutamate 353 serves as the catalytic Proton donor. Residues histidine 384 and lysine 510 contribute to the active site. A disordered region spans residues 523 to 549; it reads AEPPAAQSDSSTDALVRRYRSERGRTA. A compositionally biased stretch (basic and acidic residues) spans 537–549; that stretch reads LVRRYRSERGRTA.

It belongs to the GPI family.

The protein resides in the cytoplasm. The enzyme catalyses alpha-D-glucose 6-phosphate = beta-D-fructose 6-phosphate. It participates in carbohydrate biosynthesis; gluconeogenesis. Its pathway is carbohydrate degradation; glycolysis; D-glyceraldehyde 3-phosphate and glycerone phosphate from D-glucose: step 2/4. Functionally, catalyzes the reversible isomerization of glucose-6-phosphate to fructose-6-phosphate. The polypeptide is Glucose-6-phosphate isomerase (Mycolicibacterium gilvum (strain PYR-GCK) (Mycobacterium gilvum (strain PYR-GCK))).